The primary structure comprises 247 residues: Vacuolar iron transporter 1 (247 aa).

Over 1-33 the chain is Cytoplasmic; that stretch reads MVIAGVSPPTPSSENLLQEHEEKHFTATDVVRD. A helical transmembrane segment spans residues 34–54; the sequence is VIIGVSDGLTVPFALAAGLSG. The Vacuolar portion of the chain corresponds to 55–60; that stretch reads ANVPSS. Residues 61 to 81 form a helical membrane-spanning segment; the sequence is LILTAGIAEVAAGAISMGLGG. The Cytoplasmic segment spans residues 82–167; that stretch reads YLAAKSEEDH…PRRALESAMT (86 aa). The Fe cation site is built by E99, E102, E110, E113, M146, and E150. The helical transmembrane segment at 168-188 threads the bilayer; sequence IALAYVVGGLVPLSPYFFIPF. Over 189–191 the chain is Vacuolar; that stretch reads AKQ. The helical transmembrane segment at 192-212 threads the bilayer; that stretch reads AMITSIAVTLLALVVFGYIKG. Topologically, residues 213-219 are cytoplasmic; it reads RFTGSNP. Residues 220–240 form a helical membrane-spanning segment; that stretch reads VLSSIQTAIIGALASAAAYAM. The Vacuolar segment spans residues 241–247; sequence AKAVQSV.

The protein belongs to the CCC1 family. Expressed at high levels in the blue epidermal cells of the inner bottom part of the petal (at protein level). No detectable expression in parenchyma and epidermis of the purple segments of the petal, parenchyma of the blue segments, leaf, stem, bulb and root (at protein level). High levels of mRNA in the blue epidermal cells of the inner bottom part of the petal. Low-levels of mRNA in the purple segments of the petal, stem, leaf, root, bulb and pistil.

It localises to the vacuole membrane. It carries out the reaction Fe(2+)(in) = Fe(2+)(out). Functionally, vacuolar iron transporter involved in the transfer of iron ions from the cytosol to the vacuole for intracellular iron storage. Plays an essential role in the development of blue coloration in tulip petals most likely due to the accumulation of ferrous ions that can form complexes with anthocyanins. The polypeptide is Vacuolar iron transporter 1 (Tulipa gesneriana (Garden tulip)).